A 108-amino-acid polypeptide reads, in one-letter code: uncharacterized protein (108 aa).

At threonine 56 the chain carries Phosphothreonine. A disordered region spans residues 89–108 (AQAKGTEQAEALKKGTSKWF).

The protein resides in the cytoplasm. This is an uncharacterized protein from Schizosaccharomyces pombe (strain 972 / ATCC 24843) (Fission yeast).